The primary structure comprises 252 residues: tRNA (guanine-N(1)-)-methyltransferase (252 aa).

S-adenosyl-L-methionine contacts are provided by residues G113 and 133 to 138 (LGDYVL).

Belongs to the RNA methyltransferase TrmD family. As to quaternary structure, homodimer.

It is found in the cytoplasm. It catalyses the reaction guanosine(37) in tRNA + S-adenosyl-L-methionine = N(1)-methylguanosine(37) in tRNA + S-adenosyl-L-homocysteine + H(+). In terms of biological role, specifically methylates guanosine-37 in various tRNAs. In Stenotrophomonas maltophilia (strain K279a), this protein is tRNA (guanine-N(1)-)-methyltransferase.